Reading from the N-terminus, the 77-residue chain is MPKCPKCSKEVYFAERVTSLGKDWHRPCLKCEKCGKTLTSGGHAEHEGKPYCNHPCYAAMFGPKGFGRGGAESHTFK.

The LIM zinc-binding domain maps to 2 to 63; the sequence is PKCPKCSKEV…HPCYAAMFGP (62 aa). Residues Lys9 and Lys22 each carry the N6-acetyllysine modification. Arg68 is subject to Omega-N-methylarginine.

Functionally, seems to have a role in zinc absorption and may function as an intracellular zinc transport protein. This chain is Cysteine-rich protein 1 (CRIP1), found in Bos taurus (Bovine).